A 343-amino-acid polypeptide reads, in one-letter code: 3-dehydroquinate synthase (343 aa).

NAD(+)-binding positions include 61 to 66 (SGEKYK), 95 to 99 (GVISD), 119 to 120 (TT), Lys-132, Lys-141, and 159 to 162 (FLKT). 3 residues coordinate Zn(2+): Glu-174, His-231, and His-248.

It belongs to the sugar phosphate cyclases superfamily. Dehydroquinate synthase family. The cofactor is Co(2+). Requires Zn(2+) as cofactor. It depends on NAD(+) as a cofactor.

It localises to the cytoplasm. The enzyme catalyses 7-phospho-2-dehydro-3-deoxy-D-arabino-heptonate = 3-dehydroquinate + phosphate. It participates in metabolic intermediate biosynthesis; chorismate biosynthesis; chorismate from D-erythrose 4-phosphate and phosphoenolpyruvate: step 2/7. Functionally, catalyzes the conversion of 3-deoxy-D-arabino-heptulosonate 7-phosphate (DAHP) to dehydroquinate (DHQ). The polypeptide is 3-dehydroquinate synthase (Helicobacter pylori (strain P12)).